A 380-amino-acid chain; its full sequence is Cytochrome b (380 aa).

The next 4 membrane-spanning stretches (helical) occupy residues 33–53 (FGSL…FLAM), 77–98 (WLIR…FLHV), 113–133 (WNMG…GYVL), and 178–198 (FFAF…VHLL). Residues His83 and His97 each coordinate heme b. Positions 182 and 196 each coordinate heme b. His201 provides a ligand contact to a ubiquinone. Transmembrane regions (helical) follow at residues 226 to 246 (IKDF…TLFF), 288 to 308 (LGGV…PLLH), 320 to 340 (ITQI…WIGG), and 347 to 367 (FITI…IFMP).

This sequence belongs to the cytochrome b family. In terms of assembly, the cytochrome bc1 complex contains 11 subunits: 3 respiratory subunits (MT-CYB, CYC1 and UQCRFS1), 2 core proteins (UQCRC1 and UQCRC2) and 6 low-molecular weight proteins (UQCRH/QCR6, UQCRB/QCR7, UQCRQ/QCR8, UQCR10/QCR9, UQCR11/QCR10 and a cleavage product of UQCRFS1). This cytochrome bc1 complex then forms a dimer. Requires heme b as cofactor.

Its subcellular location is the mitochondrion inner membrane. Its function is as follows. Component of the ubiquinol-cytochrome c reductase complex (complex III or cytochrome b-c1 complex) that is part of the mitochondrial respiratory chain. The b-c1 complex mediates electron transfer from ubiquinol to cytochrome c. Contributes to the generation of a proton gradient across the mitochondrial membrane that is then used for ATP synthesis. The protein is Cytochrome b (MT-CYB) of Microtus oregoni (Creeping vole).